Reading from the N-terminus, the 253-residue chain is 3-dehydroquinate dehydratase (253 aa).

Residues 46–48 (EWR) and arginine 82 each bind 3-dehydroquinate. Residue histidine 143 is the Proton donor/acceptor of the active site. Lysine 170 acts as the Schiff-base intermediate with substrate in catalysis. Positions 213, 232, and 236 each coordinate 3-dehydroquinate.

It belongs to the type-I 3-dehydroquinase family. In terms of assembly, homodimer.

The enzyme catalyses 3-dehydroquinate = 3-dehydroshikimate + H2O. The protein operates within metabolic intermediate biosynthesis; chorismate biosynthesis; chorismate from D-erythrose 4-phosphate and phosphoenolpyruvate: step 3/7. Inhibited by flavonoids such as datiscetin, naringenin, marein and phloretin. In terms of biological role, involved in the third step of the chorismate pathway, which leads to the biosynthesis of aromatic amino acids (AroAA). Catalyzes the cis-dehydration of 3-dehydroquinate (DHQ) and introduces the first double bond of the aromatic ring to yield 3-dehydroshikimate. The reaction involves the formation of an imine intermediate between the keto group of 3-dehydroquinate and the epsilon-amino group of Lys-170 at the active site. The polypeptide is 3-dehydroquinate dehydratase (Enterococcus faecalis (strain ATCC 700802 / V583)).